The primary structure comprises 477 residues: Ribulose bisphosphate carboxylase large chain (477 aa).

A propeptide spanning residues 1–2 is cleaved from the precursor; that stretch reads MS. Residue Pro-3 is modified to N-acetylproline. Lys-14 is modified (N6,N6,N6-trimethyllysine). Asn-123 and Thr-173 together coordinate substrate. Catalysis depends on Lys-175, which acts as the Proton acceptor. Lys-177 contributes to the substrate binding site. The Mg(2+) site is built by Lys-201, Asp-203, and Glu-204. The residue at position 201 (Lys-201) is an N6-carboxylysine. The active-site Proton acceptor is the His-294. Residues Arg-295, His-327, and Ser-379 each coordinate substrate.

Belongs to the RuBisCO large chain family. Type I subfamily. Heterohexadecamer of 8 large chains and 8 small chains; disulfide-linked. The disulfide link is formed within the large subunit homodimers. The cofactor is Mg(2+). In terms of processing, the disulfide bond which can form in the large chain dimeric partners within the hexadecamer appears to be associated with oxidative stress and protein turnover.

The protein resides in the plastid. It carries out the reaction 2 (2R)-3-phosphoglycerate + 2 H(+) = D-ribulose 1,5-bisphosphate + CO2 + H2O. The enzyme catalyses D-ribulose 1,5-bisphosphate + O2 = 2-phosphoglycolate + (2R)-3-phosphoglycerate + 2 H(+). RuBisCO catalyzes two reactions: the carboxylation of D-ribulose 1,5-bisphosphate, the primary event in carbon dioxide fixation, as well as the oxidative fragmentation of the pentose substrate in the photorespiration process. Both reactions occur simultaneously and in competition at the same active site. The chain is Ribulose bisphosphate carboxylase large chain (rbcL) from Lathraea clandestina (Purple toothwort).